A 780-amino-acid chain; its full sequence is Protein SAV (780 aa).

Residues 253 to 260 and 528 to 535 each bind ATP; these read GPPGTGKT.

The protein belongs to the AAA ATPase family. CDC48 subfamily.

Not yet known, shows ATPase activity. The sequence is that of Protein SAV (sav) from Sulfolobus acidocaldarius (strain ATCC 33909 / DSM 639 / JCM 8929 / NBRC 15157 / NCIMB 11770).